A 41-amino-acid chain; its full sequence is Large ribosomal subunit protein bL36 (41 aa).

The protein belongs to the bacterial ribosomal protein bL36 family.

The protein is Large ribosomal subunit protein bL36 of Xanthomonas axonopodis pv. citri (strain 306).